We begin with the raw amino-acid sequence, 165 residues long: GPI-anchored protein LORELEI (165 aa).

The N-terminal stretch at 1–20 (MELILLFFFLMALLVSLSSS) is a signal peptide. Residues 82–93 (PYVSQINDMNSD) form a required for its function in pollen tube reception region. Asn137 is a glycosylation site (N-linked (GlcNAc...) asparagine). Ser139 is lipidated: GPI-anchor amidated serine. Residues 140 to 165 (TADSTPRFISLLISAATAVFALLVLT) constitute a propeptide, removed in mature form.

As to quaternary structure, interacts with FER. In terms of tissue distribution, expressed in leaves, buds, flowers and stems. Highest expression in the synergid cells of the female gametophyte.

It is found in the cell membrane. Its function is as follows. Female gametophyte-specific component of the signaling pathway required for fertilization. Required for reception of the pollen tube by the female gametophyte. Acts specifically at the synergid cell surface for pollen tube reception. Plays a role in double fertilization and early seed development. Component of the FER-regulated Rho GTPase signaling complex. Acts as a chaperone and coreceptor for FER. Required for localization of FER to the plasma membrane. The polypeptide is GPI-anchored protein LORELEI (LRE) (Arabidopsis thaliana (Mouse-ear cress)).